Reading from the N-terminus, the 250-residue chain is MCCAALAPPMAATVGPESIWLWIGTIGMTLGTLYFVGRGRGVRDRKMQEFYIITIFITTIAAAMYFAMATGFGVTEVMVGDEALTIYWARYADWLFTTPLLLLDLSLLAGANRNTIATLIGLDVFMIGTGAIAALSSTPGTRIAWWAISTGALLALLYVLVGTLSENARNRAPEVASLFGRLRNLVIALWFLYPVVWILGTEGTFGILPLYWETAAFMVLDLSAKVGFGVILLQSRSVLERVATPTAAPT.

Residues 1–18 (MCCAALAPPMAATVGPES) lie on the Extracellular side of the membrane. Residues 19-37 (IWLWIGTIGMTLGTLYFVG) form a helical membrane-spanning segment. The Cytoplasmic portion of the chain corresponds to 38-51 (RGRGVRDRKMQEFY). Residues 52–70 (IITIFITTIAAAMYFAMAT) traverse the membrane as a helical segment. Residues 71–86 (GFGVTEVMVGDEALTI) are Extracellular-facing. Residues 87–104 (YWARYADWLFTTPLLLLD) traverse the membrane as a helical segment. At 105 to 115 (LSLLAGANRNT) the chain is on the cytoplasmic side. A helical transmembrane segment spans residues 116-135 (IATLIGLDVFMIGTGAIAAL). Residues 136–142 (SSTPGTR) lie on the Extracellular side of the membrane. A helical membrane pass occupies residues 143 to 162 (IAWWAISTGALLALLYVLVG). At 163–180 (TLSENARNRAPEVASLFG) the chain is on the cytoplasmic side. Residues 181–199 (RLRNLVIALWFLYPVVWIL) form a helical membrane-spanning segment. Residues 200–212 (GTEGTFGILPLYW) are Extracellular-facing. A helical transmembrane segment spans residues 213–232 (ETAAFMVLDLSAKVGFGVIL). Lys225 bears the N6-(retinylidene)lysine mark. Over 233–250 (LQSRSVLERVATPTAAPT) the chain is Cytoplasmic.

It belongs to the archaeal/bacterial/fungal opsin family.

It localises to the cell membrane. Its function is as follows. Light-driven proton pump. The chain is Bacteriorhodopsin (bop) from Haloterrigena sp. (strain arg-4).